A 504-amino-acid chain; its full sequence is Cytochrome P450 6B2 (504 aa).

Cysteine 445 lines the heme pocket.

It belongs to the cytochrome P450 family. Heme serves as cofactor.

It is found in the endoplasmic reticulum membrane. Its subcellular location is the microsome membrane. It carries out the reaction an organic molecule + reduced [NADPH--hemoprotein reductase] + O2 = an alcohol + oxidized [NADPH--hemoprotein reductase] + H2O + H(+). The chain is Cytochrome P450 6B2 (CYP6B2) from Helicoverpa armigera (Cotton bollworm).